A 465-amino-acid chain; its full sequence is GTPase Der (465 aa).

EngA-type G domains lie at 3–167 (PLVA…PERG) and 179–352 (IHIA…VSAL). GTP contacts are provided by residues 9 to 16 (GRPNVGKS), 57 to 61 (DTGGM), 119 to 122 (NKID), 185 to 192 (GRPNVGKS), 232 to 236 (DTAGL), and 297 to 300 (NKWD). In terms of domain architecture, KH-like spans 353-437 (RQFSTSEVNK…PVRFLFREGD (85 aa)).

The protein belongs to the TRAFAC class TrmE-Era-EngA-EngB-Septin-like GTPase superfamily. EngA (Der) GTPase family. In terms of assembly, associates with the 50S ribosomal subunit.

In terms of biological role, GTPase that plays an essential role in the late steps of ribosome biogenesis. This Xylella fastidiosa (strain 9a5c) protein is GTPase Der.